The chain runs to 135 residues: Lactoylglutathione lyase (135 aa).

Residues 2–126 enclose the VOC domain; sequence RLLHTMLRVG…DGYKIELIEA (125 aa). His5 contributes to the Ni(2+) binding site. Arg9 contributes to the substrate binding site. A Ni(2+)-binding site is contributed by Glu56. Substrate-binding residues include Asn60 and His74. 2 residues coordinate Ni(2+): His74 and Glu122. Residue Glu122 is the Proton donor/acceptor of the active site.

Belongs to the glyoxalase I family. In terms of assembly, homodimer. Ni(2+) serves as cofactor.

It catalyses the reaction (R)-S-lactoylglutathione = methylglyoxal + glutathione. The protein operates within secondary metabolite metabolism; methylglyoxal degradation; (R)-lactate from methylglyoxal: step 1/2. Functionally, catalyzes the conversion of hemimercaptal, formed from methylglyoxal and glutathione, to S-lactoylglutathione. In Salmonella typhi, this protein is Lactoylglutathione lyase (gloA).